A 330-amino-acid chain; its full sequence is N-acetyl-gamma-glutamyl-phosphate reductase (330 aa).

Cysteine 143 is an active-site residue.

Belongs to the NAGSA dehydrogenase family. Type 1 subfamily.

The protein localises to the cytoplasm. It carries out the reaction N-acetyl-L-glutamate 5-semialdehyde + phosphate + NADP(+) = N-acetyl-L-glutamyl 5-phosphate + NADPH + H(+). Its pathway is amino-acid biosynthesis; L-arginine biosynthesis; N(2)-acetyl-L-ornithine from L-glutamate: step 3/4. Functionally, catalyzes the NADPH-dependent reduction of N-acetyl-5-glutamyl phosphate to yield N-acetyl-L-glutamate 5-semialdehyde. This chain is N-acetyl-gamma-glutamyl-phosphate reductase, found in Methanocorpusculum labreanum (strain ATCC 43576 / DSM 4855 / Z).